We begin with the raw amino-acid sequence, 157 residues long: Protein PEROXIN-4 (157 aa).

The 151-residue stretch at 3 to 153 (ASRARLFKEY…AQMYTRLAAM (151 aa)) folds into the UBC core domain. The active-site Glycyl thioester intermediate is the Cys90.

Belongs to the ubiquitin-conjugating enzyme family. In terms of assembly, interacts with PEX22.

Its subcellular location is the peroxisome membrane. The catalysed reaction is S-ubiquitinyl-[E1 ubiquitin-activating enzyme]-L-cysteine + [E2 ubiquitin-conjugating enzyme]-L-cysteine = [E1 ubiquitin-activating enzyme]-L-cysteine + S-ubiquitinyl-[E2 ubiquitin-conjugating enzyme]-L-cysteine.. It participates in protein modification; protein ubiquitination. In terms of biological role, required for peroxisome biogenesis. Necessary for the developmental elimination of obsolete peroxisome matrix proteins. May be involved in the ubiquitination of PEX5, targeting it for recycling. Accepts the ubiquitin from the E1 complex and catalyzes its covalent attachment to other proteins. The protein is Protein PEROXIN-4 (PEX4) of Arabidopsis thaliana (Mouse-ear cress).